Consider the following 250-residue polypeptide: Leucyl/phenylalanyl-tRNA--protein transferase (250 aa).

The protein belongs to the L/F-transferase family.

The protein localises to the cytoplasm. It catalyses the reaction N-terminal L-lysyl-[protein] + L-leucyl-tRNA(Leu) = N-terminal L-leucyl-L-lysyl-[protein] + tRNA(Leu) + H(+). The enzyme catalyses N-terminal L-arginyl-[protein] + L-leucyl-tRNA(Leu) = N-terminal L-leucyl-L-arginyl-[protein] + tRNA(Leu) + H(+). It carries out the reaction L-phenylalanyl-tRNA(Phe) + an N-terminal L-alpha-aminoacyl-[protein] = an N-terminal L-phenylalanyl-L-alpha-aminoacyl-[protein] + tRNA(Phe). Functions in the N-end rule pathway of protein degradation where it conjugates Leu, Phe and, less efficiently, Met from aminoacyl-tRNAs to the N-termini of proteins containing an N-terminal arginine or lysine. In Cupriavidus pinatubonensis (strain JMP 134 / LMG 1197) (Cupriavidus necator (strain JMP 134)), this protein is Leucyl/phenylalanyl-tRNA--protein transferase.